A 536-amino-acid polypeptide reads, in one-letter code: Lysosomal acid glucosylceramidase (536 aa).

Positions 1-39 are cleaved as a signal peptide; sequence MELSSPSREEYPMPRGRVGIMAASLMGLLLLHTVSWVSG. 2 disulfide bridges follow: cysteine 43-cysteine 55 and cysteine 57-cysteine 62. Residues asparagine 58, asparagine 98, asparagine 185, and asparagine 208 are each glycosylated (N-linked (GlcNAc...) asparagine). The active-site Proton donor is the glutamate 274. An N-linked (GlcNAc...) asparagine glycan is attached at asparagine 309. The active-site Nucleophile is the glutamate 379. N-linked (GlcNAc...) asparagine glycosylation occurs at asparagine 501.

This sequence belongs to the glycosyl hydrolase 30 family. As to quaternary structure, interacts with saposin-C. Interacts with SCARB2. Interacts with TCP1. Interacts with GRN; this interaction prevents aggregation of GBA1-SCARB2 complex via interaction with HSPA1A upon stress.

It is found in the lysosome membrane. The enzyme catalyses a beta-D-glucosyl-(1&lt;-&gt;1')-N-acylsphing-4-enine + H2O = an N-acylsphing-4-enine + D-glucose. The catalysed reaction is a beta-D-galactosyl-(1&lt;-&gt;1')-N-acylsphing-4-enine + H2O = an N-acylsphing-4-enine + D-galactose. It catalyses the reaction cholesteryl 3-beta-D-glucoside + H2O = cholesterol + D-glucose. It carries out the reaction a beta-D-glucosyl-(1&lt;-&gt;1')-N-acylsphing-4-enine + cholesterol = cholesteryl 3-beta-D-glucoside + an N-acylsphing-4-enine. The enzyme catalyses beta-D-glucosyl-N-(9Z-octadecenoyl)-sphing-4E-enine + cholesterol = N-(9Z-octadecenoyl)-sphing-4-enine + cholesteryl 3-beta-D-glucoside. The catalysed reaction is beta-D-glucosyl-N-octanoylsphing-4E-enine + cholesterol = N-octanoylsphing-4-enine + cholesteryl 3-beta-D-glucoside. It catalyses the reaction beta-D-glucosyl-N-dodecanoylsphing-4-enine + cholesterol = N-dodecanoylsphing-4-enine + cholesteryl 3-beta-D-glucoside. It carries out the reaction beta-D-glucosyl-(1&lt;-&gt;1)-N-octadecanoylsphing-4-enine + cholesterol = N-octadecanoylsphing-4-enine + cholesteryl 3-beta-D-glucoside. The enzyme catalyses beta-D-glucosyl-(1&lt;-&gt;1')-N-(15Z-tetracosenoyl)-sphing-4-enine + cholesterol = N-(15Z-tetracosenoyl)-sphing-4-enine + cholesteryl 3-beta-D-glucoside. The catalysed reaction is a beta-D-galactosyl-(1&lt;-&gt;1')-N-acylsphing-4-enine + cholesterol = cholesteryl 3-beta-D-galactoside + an N-acylsphing-4-enine. It catalyses the reaction 1-(beta-D-galactosyl)-N-dodecanoylsphing-4-enine + cholesterol = cholesteryl 3-beta-D-galactoside + N-dodecanoylsphing-4-enine. It carries out the reaction a beta-D-xylosyl-(1&lt;-&gt;1')-N-acylsphing-4-enine + cholesterol = cholesteryl 3-beta-D-xyloside + an N-acylsphing-4-enine. The enzyme catalyses beta-D-xylosyl-(1&lt;-&gt;1')-N-(9Z-octadecenoyl)-sphing-4-enine + cholesterol = cholesteryl 3-beta-D-xyloside + N-(9Z-octadecenoyl)-sphing-4-enine. Its pathway is steroid metabolism; cholesterol metabolism. The protein operates within sphingolipid metabolism. Its function is as follows. Glucosylceramidase that catalyzes, within the lysosomal compartment, the hydrolysis of glucosylceramides/GlcCers (such as beta-D-glucosyl-(1&lt;-&gt;1')-N-acylsphing-4-enine) into free ceramides (such as N-acylsphing-4-enine) and glucose. Plays a central role in the degradation of complex lipids and the turnover of cellular membranes. Through the production of ceramides, participates in the PKC-activated salvage pathway of ceramide formation. Catalyzes the glucosylation of cholesterol, through a transglucosylation reaction where glucose is transferred from GlcCer to cholesterol. GlcCer containing mono-unsaturated fatty acids (such as beta-D-glucosyl-N-(9Z-octadecenoyl)-sphing-4-enine) are preferred as glucose donors for cholesterol glucosylation when compared with GlcCer containing same chain length of saturated fatty acids (such as beta-D-glucosyl-N-octadecanoyl-sphing-4-enine). Under specific conditions, may alternatively catalyze the reverse reaction, transferring glucose from cholesteryl 3-beta-D-glucoside to ceramide. Can also hydrolyze cholesteryl 3-beta-D-glucoside producing glucose and cholesterol. Catalyzes the hydrolysis of galactosylceramides/GalCers (such as beta-D-galactosyl-(1&lt;-&gt;1')-N-acylsphing-4-enine), as well as the transfer of galactose between GalCers and cholesterol in vitro, but with lower activity than with GlcCers. Contrary to GlcCer and GalCer, xylosylceramide/XylCer (such as beta-D-xyosyl-(1&lt;-&gt;1')-N-acylsphing-4-enine) is not a good substrate for hydrolysis, however it is a good xylose donor for transxylosylation activity to form cholesteryl 3-beta-D-xyloside. In Bos taurus (Bovine), this protein is Lysosomal acid glucosylceramidase (GBA1).